The following is a 72-amino-acid chain: UPF0352 protein NTHI1007 (72 aa).

It belongs to the UPF0352 family.

The protein is UPF0352 protein NTHI1007 of Haemophilus influenzae (strain 86-028NP).